Here is a 367-residue protein sequence, read N- to C-terminus: BTB/POZ domain-containing protein Tiwaz (367 aa).

Disordered stretches follow at residues 16–46 (LTVDSSCPKRKKCDMDRERERDVKALEPRDL) and 62–87 (SSPTVSPTISNSSSPTPTPPASSSVT). A compositionally biased stretch (basic and acidic residues) spans 28–45 (CDMDRERERDVKALEPRD). The region spanning 135–205 (APVHIDVGGT…MRNSRLLIAE (71 aa)) is the BTB domain. The tract at residues 240–261 (GNYLVAPPTPPARHIKTSPRTS) is disordered.

Its function is as follows. Functions with the transcription factor TfAP-2 to regulate octopamine neuronal signaling pathways that control behaviors such as male aggression, male mating, and the initiation of feeding. Required for TfAP-2 transcriptional activity in octopaminergic neurons. Functions with TfAP-2 to regulate expression of genes which are involved in promoting octopamine production and secretion from octopaminergic neurons, such as Tbh and Vmat. Octopamine then modulates feeding and male aggression by regulating the expression of the satiation hormone Dsk in insulin-producing cells (IPCs). Functions with octopamine and Dsk as part of a negative feedback loop to prevent overeating; acts with TfAP-2 to regulate octopamine signaling pathways that initiate feeding, then octopamine activates expression of Dsk which inhibits consummatory behavior. May also be involved in negatively regulating nociception in larvae to prevent spontaneous pain and hyperalgesia. The sequence is that of BTB/POZ domain-containing protein Tiwaz from Drosophila melanogaster (Fruit fly).